Reading from the N-terminus, the 655-residue chain is E3 ubiquitin-protein ligase TRIM32 (655 aa).

Residues 21-66 (CPICMESFTEEQLRPKLLHCGHTICRQCLEKLLASSINGVRCPFCS) form an RING-type zinc finger. Ser-56 carries the phosphoserine; by CHEK2 modification. Residues 96-139 (VGLLMCRGCGRRLPRQFCRSCGVVLCEPCREADHQPPGHCTLPV) form a B box-type; atypical zinc finger. Residues Cys-101, Cys-104, Cys-124, and His-129 each coordinate Zn(2+). Positions 139 to 198 (VKEAAEERRRDFGEKLTRLRELTGELQRRKAALEGVSRDLQARYKAVLQEYGHEERRIQE) form a coiled coil. Positions 327–347 (MDMSPEEVAPSPRASPAKQRS) are disordered. Ser-330, Ser-337, and Ser-341 each carry phosphoserine. NHL repeat units follow at residues 360-403 (LKKM…FNRK), 417-460 (DSFV…YTMD), 461-501 (GHCV…FTVD), 564-607 (GRQI…FPKG), and 608-648 (GGYS…YSYH).

It belongs to the TRIM/RBCC family. In terms of assembly, it self-associates. Interacts with DTNBP1. Interacts with PIAS4/PIASY upon treatment with UVB and TNF-alpha. Interacts with AMBRA1; promoting activation of ULK1 through unanchored 'Lys-63'-linked polyubiquitin chains. Interacts with TICAM1 and TAX1BP1; these interactions target TICAM1 to TAX1BP1-mediated selective autophagic degradation. Post-translationally, ubiquitinated. Phosphorylation at Ser-56 by CHEK2 under oxidative stress, activates the E3 ligase activity and promotes ATG7 ubiquitination leading to positive regulation of the autophagosme assembly. As to expression, ubiquitous. High expression in brain.

The protein localises to the cytoplasm. The enzyme catalyses S-ubiquitinyl-[E2 ubiquitin-conjugating enzyme]-L-cysteine + [acceptor protein]-L-lysine = [E2 ubiquitin-conjugating enzyme]-L-cysteine + N(6)-ubiquitinyl-[acceptor protein]-L-lysine.. Its pathway is protein modification; protein ubiquitination. Its function is as follows. E3 ubiquitin ligase that plays a role in various biological processes including neural stem cell differentiation, innate immunity, inflammatory resonse and autophagy. Plays a role in virus-triggered induction of IFN-beta and TNF-alpha by mediating the ubiquitination of STING1. Mechanistically, targets STING1 for 'Lys-63'-linked ubiquitination which promotes the interaction of STING1 with TBK1. Regulates bacterial clearance and promotes autophagy in Mycobacterium tuberculosis-infected macrophages. Negatively regulates TLR3/4-mediated innate immune and inflammatory response by triggering the autophagic degradation of TICAM1 in an E3 activity-independent manner. Plays an essential role in oxidative stress induced cell death by inducing loss of transmembrane potential and enhancing mitochondrial reactive oxygen species (ROS) production during oxidative stress conditions. Ubiquitinates XIAP and targets it for proteasomal degradation. Ubiquitinates DTNBP1 (dysbindin) and promotes its degradation. May ubiquitinate BBS2. Ubiquitinates PIAS4/PIASY and promotes its degradation in keratinocytes treated with UVB and TNF-alpha. Also acts as a regulator of autophagy by mediating formation of unanchored 'Lys-63'-linked polyubiquitin chains that activate ULK1: interaction with AMBRA1 is required for ULK1 activation. Positively regulates dendritic branching by promoting ubiquitination and subsequent degradation of the epigenetic factor CDYL. Under metabolic stress and phosphorylation by CHK2, mediates 'Lys-63'-linked ubiquitination of ATG7 at 'Lys-41' to initiate autophagy. The polypeptide is E3 ubiquitin-protein ligase TRIM32 (Mus musculus (Mouse)).